We begin with the raw amino-acid sequence, 741 residues long: HSP-interacting protein (741 aa).

TPR repeat units lie at residues 26 to 59 (SRELKEEGTRLFNRRDFEGAAFKYDKAVQLLPAG), 65 to 100 (AHLRASIAHCYMRMSPAEFHHAIHECNLALEAVPRY), and 102 to 134 (RALLRRAACFEALGRPDLAWGDIRTVLRWEPGN). The segment at 168–270 (ASAKGEERKK…GESKQQKHSA (103 aa)) is disordered. Over residues 171 to 184 (KGEERKKSRNKRFD) the composition is skewed to basic and acidic residues. Residues 201–218 (SASTEKQAGPRQTNGTGN) show a composition bias toward polar residues. The segment covering 219–247 (HQDHTEDSESNGLEKLEQSTETGEKDMGK) has biased composition (basic and acidic residues). A compositionally biased stretch (basic residues) spans 248–258 (KRGAHAAGKKP). The PB1 domain occupies 285–364 (MKDVKLVFGE…VPIRFYVVEV (80 aa)). TPR repeat units follow at residues 496-530 (EFILEKVNVSYDWACTEYAKAGAMFEEAVKTKSDF), 532-557 (EGLIALGQQKFEQAKLSWYYALACKI), 558-591 (NMETEVLELFNHAEDNMEKGMDMWERMETLRLKG), and 628-663 (SHINILWGTILYERSVVEFNLGLPSWEESLTVAMEK).

In terms of assembly, interacts (via C-terminus) with O1. Interacts (via C-terminus) with OP10 (via N-terminus).

In terms of biological role, acts as a co-chaperone for HSP90 and is required for proper folding of the myosin motor domain. In Zea mays (Maize), this protein is HSP-interacting protein.